The following is an 873-amino-acid chain: Alanine--tRNA ligase (873 aa).

Zn(2+) contacts are provided by His559, His563, Cys661, and His665.

It belongs to the class-II aminoacyl-tRNA synthetase family. Homotetramer. Requires Zn(2+) as cofactor.

It localises to the cytoplasm. It carries out the reaction tRNA(Ala) + L-alanine + ATP = L-alanyl-tRNA(Ala) + AMP + diphosphate. Functionally, catalyzes the attachment of alanine to tRNA(Ala) in a two-step reaction: alanine is first activated by ATP to form Ala-AMP and then transferred to the acceptor end of tRNA(Ala). Also edits incorrectly charged Ser-tRNA(Ala) and Gly-tRNA(Ala) via its editing domain. The sequence is that of Alanine--tRNA ligase from Wigglesworthia glossinidia brevipalpis.